A 218-amino-acid polypeptide reads, in one-letter code: Glutathione S-transferase D7 (218 aa).

The region spanning 1-82 is the GST N-terminal domain; it reads MTPVLYYLPP…YLVSAYGKDE (82 aa). Glutathione contacts are provided by residues Ser11, 52–54, and 66–68; these read HCI and ESR. One can recognise a GST C-terminal domain in the interval 88–207; that stretch reads DFRSRAIVDQ…KEINETGAET (120 aa).

It belongs to the GST superfamily. Theta family. Homodimer.

The enzyme catalyses RX + glutathione = an S-substituted glutathione + a halide anion + H(+). Conjugation of reduced glutathione to a wide number of exogenous and endogenous hydrophobic electrophiles. The sequence is that of Glutathione S-transferase D7 from Anopheles gambiae (African malaria mosquito).